The primary structure comprises 1436 residues: DNA polymerase III PolC-type (1436 aa).

The 157-residue stretch at Tyr420–Phe576 folds into the Exonuclease domain.

This sequence belongs to the DNA polymerase type-C family. PolC subfamily.

The protein localises to the cytoplasm. The enzyme catalyses DNA(n) + a 2'-deoxyribonucleoside 5'-triphosphate = DNA(n+1) + diphosphate. Its function is as follows. Required for replicative DNA synthesis. This DNA polymerase also exhibits 3' to 5' exonuclease activity. This Staphylococcus aureus (strain MW2) protein is DNA polymerase III PolC-type.